A 210-amino-acid polypeptide reads, in one-letter code: MSKFIVIEGLEGAGKSTAIKNVLATLAKHGITSPVTTREPGGTPLAEKMRELVKQGHPDEPLTDMAELLLLYAARAQLVGNVIKPALARGEWVVGDRHDLSSQAYQGGGRGFDRELMMTMRNTVLGDFKPDLTIYMDIDPKLGLQRASARGELDRIEQMKLDFFERSRERYLEFANSDESIITIDAGQDLETVTNSIITALEAWLVKNGN.

9-16 (GLEGAGKS) provides a ligand contact to ATP.

The protein belongs to the thymidylate kinase family.

The enzyme catalyses dTMP + ATP = dTDP + ADP. Phosphorylation of dTMP to form dTDP in both de novo and salvage pathways of dTTP synthesis. This Aliivibrio fischeri (strain ATCC 700601 / ES114) (Vibrio fischeri) protein is Thymidylate kinase.